We begin with the raw amino-acid sequence, 325 residues long: Probable tRNA-dihydrouridine synthase 2 (325 aa).

18-20 (PME) is a binding site for FMN. C105 functions as the Proton donor in the catalytic mechanism. Residues K143, 208-210 (NGD), and 232-233 (GR) each bind FMN.

It belongs to the Dus family. Requires FMN as cofactor.

The enzyme catalyses a 5,6-dihydrouridine in tRNA + NAD(+) = a uridine in tRNA + NADH + H(+). The catalysed reaction is a 5,6-dihydrouridine in tRNA + NADP(+) = a uridine in tRNA + NADPH + H(+). Functionally, catalyzes the synthesis of 5,6-dihydrouridine (D), a modified base found in the D-loop of most tRNAs, via the reduction of the C5-C6 double bond in target uridines. The chain is Probable tRNA-dihydrouridine synthase 2 (dus2) from Bacillus subtilis (strain 168).